Consider the following 397-residue polypeptide: Succinyl-diaminopimelate desuccinylase (397 aa).

Position 73 (His-73) interacts with Zn(2+). Residue Asp-75 is part of the active site. Asp-106 contacts Zn(2+). The Proton acceptor role is filled by Glu-140. Positions 141, 169, and 366 each coordinate Zn(2+).

It belongs to the peptidase M20A family. DapE subfamily. As to quaternary structure, homodimer. Requires Zn(2+) as cofactor. Co(2+) serves as cofactor.

It catalyses the reaction N-succinyl-(2S,6S)-2,6-diaminopimelate + H2O = (2S,6S)-2,6-diaminopimelate + succinate. It participates in amino-acid biosynthesis; L-lysine biosynthesis via DAP pathway; LL-2,6-diaminopimelate from (S)-tetrahydrodipicolinate (succinylase route): step 3/3. In terms of biological role, catalyzes the hydrolysis of N-succinyl-L,L-diaminopimelic acid (SDAP), forming succinate and LL-2,6-diaminopimelate (DAP), an intermediate involved in the bacterial biosynthesis of lysine and meso-diaminopimelic acid, an essential component of bacterial cell walls. This chain is Succinyl-diaminopimelate desuccinylase, found in Rhizobium johnstonii (strain DSM 114642 / LMG 32736 / 3841) (Rhizobium leguminosarum bv. viciae).